A 422-amino-acid polypeptide reads, in one-letter code: Adenylosuccinate synthetase (422 aa).

Residues Gly-11–Lys-17 and Gly-39–Thr-41 contribute to the GTP site. Asp-12 functions as the Proton acceptor in the catalytic mechanism. Residues Asp-12 and Gly-39 each coordinate Mg(2+). IMP-binding positions include Asp-12 to Lys-15, Asn-37 to His-40, Thr-129, Arg-143, Asn-220, Thr-235, and Arg-299. His-40 serves as the catalytic Proton donor. Val-295 to Arg-301 is a substrate binding site. Residues Arg-301, Lys-327–Asp-329, and Gly-410–Gly-412 contribute to the GTP site.

This sequence belongs to the adenylosuccinate synthetase family. As to quaternary structure, homodimer. Requires Mg(2+) as cofactor.

It is found in the cytoplasm. It catalyses the reaction IMP + L-aspartate + GTP = N(6)-(1,2-dicarboxyethyl)-AMP + GDP + phosphate + 2 H(+). It participates in purine metabolism; AMP biosynthesis via de novo pathway; AMP from IMP: step 1/2. Functionally, plays an important role in the de novo pathway and in the salvage pathway of purine nucleotide biosynthesis. Catalyzes the first committed step in the biosynthesis of AMP from IMP. This Arthroderma otae (strain ATCC MYA-4605 / CBS 113480) (Microsporum canis) protein is Adenylosuccinate synthetase.